A 245-amino-acid chain; its full sequence is Probable phosphatase YE2421 (245 aa).

Histidine 7, histidine 9, histidine 15, histidine 40, glutamate 73, histidine 101, histidine 131, aspartate 192, and histidine 194 together coordinate Zn(2+).

The protein belongs to the PHP family. In terms of assembly, homotrimer. The cofactor is Zn(2+).

The polypeptide is Probable phosphatase YE2421 (Yersinia enterocolitica serotype O:8 / biotype 1B (strain NCTC 13174 / 8081)).